The following is a 347-amino-acid chain: Dual specificity mitogen-activated protein kinase kinase 3 (347 aa).

The residue at position 1 (methionine 1) is an N-acetylmethionine. Residues 1–11 (MESPAASPPAS) are compositionally biased toward pro residues. The disordered stretch occupies residues 1–45 (MESPAASPPASLPQTKGKSKRKKDLRISCVSKPPVSNPTPPRNLD). Serine 3 bears the Phosphoserine mark. The Protein kinase domain maps to 64–325 (LVTISELGRG…YLELMEHPFF (262 aa)). ATP contacts are provided by residues 70 to 78 (LGRGAYGVV) and lysine 93. Aspartate 190 serves as the catalytic Proton acceptor. Serine 218 is subject to Phosphoserine. Phosphothreonine is present on threonine 222.

This sequence belongs to the protein kinase superfamily. STE Ser/Thr protein kinase family. MAP kinase kinase subfamily. Component of a signaling complex containing at least AKAP13, PKN1, MAPK14, ZAK and MAP2K3. Within this complex, AKAP13 interacts directly with PKN1, which in turn recruits MAPK14, MAP2K3 and ZAK. Binds to DYRK1B/MIRK and increases its kinase activity. Part of a complex with MAP3K3, RAC1 and CCM2. Interacts with ARRB1. In terms of processing, autophosphorylated. Phosphorylation on Ser-218 and Thr-222 by MAP kinase kinase kinases positively regulates the kinase activity. Phosphorylated by TAOK2.

It carries out the reaction L-seryl-[protein] + ATP = O-phospho-L-seryl-[protein] + ADP + H(+). It catalyses the reaction L-threonyl-[protein] + ATP = O-phospho-L-threonyl-[protein] + ADP + H(+). The catalysed reaction is L-tyrosyl-[protein] + ATP = O-phospho-L-tyrosyl-[protein] + ADP + H(+). With respect to regulation, activated by dual phosphorylation on Ser-218 and Thr-222. In terms of biological role, dual specificity kinase. Is activated by cytokines and environmental stress in vivo. Catalyzes the concomitant phosphorylation of a threonine and a tyrosine residue in the MAP kinase p38. Part of a signaling cascade that begins with the activation of the adrenergic receptor ADRA1B and leads to the activation of MAPK14. In Mus musculus (Mouse), this protein is Dual specificity mitogen-activated protein kinase kinase 3 (Map2k3).